A 38-amino-acid chain; its full sequence is Photosystem II reaction center protein L (38 aa).

Residues 17–37 (SLYWGLLLIFVLAVLFSNYFF) form a helical membrane-spanning segment.

The protein belongs to the PsbL family. As to quaternary structure, PSII is composed of 1 copy each of membrane proteins PsbA, PsbB, PsbC, PsbD, PsbE, PsbF, PsbH, PsbI, PsbJ, PsbK, PsbL, PsbM, PsbT, PsbX, PsbY, PsbZ, Psb30/Ycf12, at least 3 peripheral proteins of the oxygen-evolving complex and a large number of cofactors. It forms dimeric complexes.

The protein resides in the plastid. Its subcellular location is the chloroplast thylakoid membrane. One of the components of the core complex of photosystem II (PSII). PSII is a light-driven water:plastoquinone oxidoreductase that uses light energy to abstract electrons from H(2)O, generating O(2) and a proton gradient subsequently used for ATP formation. It consists of a core antenna complex that captures photons, and an electron transfer chain that converts photonic excitation into a charge separation. This subunit is found at the monomer-monomer interface and is required for correct PSII assembly and/or dimerization. The chain is Photosystem II reaction center protein L from Psilotum nudum (Whisk fern).